A 298-amino-acid polypeptide reads, in one-letter code: Bifunctional protein FolD (298 aa).

NADP(+)-binding positions include 165–167, S190, and I231; that span reads GRS.

This sequence belongs to the tetrahydrofolate dehydrogenase/cyclohydrolase family. Homodimer.

The catalysed reaction is (6R)-5,10-methylene-5,6,7,8-tetrahydrofolate + NADP(+) = (6R)-5,10-methenyltetrahydrofolate + NADPH. It carries out the reaction (6R)-5,10-methenyltetrahydrofolate + H2O = (6R)-10-formyltetrahydrofolate + H(+). It participates in one-carbon metabolism; tetrahydrofolate interconversion. In terms of biological role, catalyzes the oxidation of 5,10-methylenetetrahydrofolate to 5,10-methenyltetrahydrofolate and then the hydrolysis of 5,10-methenyltetrahydrofolate to 10-formyltetrahydrofolate. The chain is Bifunctional protein FolD from Prochlorococcus marinus (strain MIT 9301).